A 525-amino-acid polypeptide reads, in one-letter code: GMP synthase [glutamine-hydrolyzing] (525 aa).

The Glutamine amidotransferase type-1 domain occupies 9 to 207; that stretch reads RILILDFGSQ…VLDICQCEKL (199 aa). The Nucleophile role is filled by Cys86. Active-site residues include His181 and Glu183. The region spanning 208-400 is the GMPS ATP-PPase domain; it reads WTPDAIIEDA…LGLPYDMLYR (193 aa). 235 to 241 is a binding site for ATP; sequence SGGVDSS.

In terms of assembly, homodimer.

The enzyme catalyses XMP + L-glutamine + ATP + H2O = GMP + L-glutamate + AMP + diphosphate + 2 H(+). It functions in the pathway purine metabolism; GMP biosynthesis; GMP from XMP (L-Gln route): step 1/1. Catalyzes the synthesis of GMP from XMP. This Pseudoalteromonas atlantica (strain T6c / ATCC BAA-1087) protein is GMP synthase [glutamine-hydrolyzing].